The primary structure comprises 433 residues: MKKMTVCFLVLMMLLTLVIAGCSAEKSSGKSGETELTFWTFNGLHEQFYVEMVKEWNKKYPDRKIKLNTVVYPYGQMHDNLSISLIAGEGVPDIADVELARFSNFLKGSDIPLADLTPLIEKDRDKFVEARLTLYSKNGKLYGLDTHVGTTVMFYNMDVMKKAGVNPDDIKTWDDYHKAGQKVRKVTGKPMGTVETNDSATFLSMISQQNSGYFDKNGKLILNNDTNVKTLQYLKDMINDKTMIPAPGGGHHSEEYYGFMNQGGAASVLMPIWYMGRFIDYMPDLKGKIAIRPLPAWKEGGDRSAGLGGTATVVPKQSKHVELAKEFLAFAKGSEEGNKKLWSVLGFDPLRWDVWSSKELKEKNKYTDYFQNGTGIFSVLLDIKDEINPIYLHEDFAKASDLVNRSVLFDALKSQQKTPKQALDRAAGELKQK.

A signal peptide spans 1-21 (MKKMTVCFLVLMMLLTLVIAG). Cysteine 22 carries N-palmitoyl cysteine lipidation. Residue cysteine 22 is the site of S-diacylglycerol cysteine attachment.

It belongs to the bacterial solute-binding protein 1 family. The complex is composed of two ATP-binding proteins (MsmX), two transmembrane proteins (AraP and AraQ) and a solute-binding protein (AraN).

It is found in the cell membrane. In terms of biological role, part of the ABC transporter complex AraNPQ involved in the uptake of arabinooligosaccharides. Transports alpha-1,5-arabinooligosaccharides, at least up to four L-arabinosyl units. AraN captures the substrate and delivers it to the two transmembrane components. The sequence is that of Arabinooligosaccharide-binding protein from Bacillus subtilis (strain 168).